The chain runs to 417 residues: Serpin H1 (417 aa).

An N-terminal signal peptide occupies residues 1-18 (MRSLLLLSAFCLLEAALA). Lys-94 bears the N6-succinyllysine mark. 2 N-linked (GlcNAc...) asparagine glycosylation sites follow: Asn-120 and Asn-125. Ser-141 carries the post-translational modification Phosphoserine. N6-acetyllysine is present on Lys-206. Lys-295 is subject to N6-succinyllysine. The residue at position 318 (Lys-318) is an N6-acetyllysine. A Prevents secretion from ER motif is present at residues 414-417 (RDEL).

Belongs to the serpin family.

The protein localises to the endoplasmic reticulum lumen. Its function is as follows. Binds specifically to collagen. Could be involved as a chaperone in the biosynthetic pathway of collagen. The sequence is that of Serpin H1 (SERPINH1) from Pongo abelii (Sumatran orangutan).